Reading from the N-terminus, the 931-residue chain is Protocadherin gamma-A5 (931 aa).

An N-terminal signal peptide occupies residues 1–29; sequence MASPPRGWGCGELLLPFMLLGTLCEPGSG. Cadherin domains follow at residues 30–133, 134–242, 243–347, 348–452, 453–562, and 570–683; these read QIRY…FPRF, RDEE…APLF, TPSE…APEV, ILTS…PPNF, PQAS…TPEI, and DGST…TPID. The Extracellular portion of the chain corresponds to 30-692; that stretch reads QIRYSMPEEL…DPEDLDLTLY (663 aa). N-linked (GlcNAc...) asparagine glycosylation is found at Asn-419 and Asn-545. Residues 693–713 form a helical membrane-spanning segment; it reads LVVAVAAVSCVFLAFVIVLLV. At 714–931 the chain is on the cytoplasmic side; that stretch reads LRLRRWHKSR…KKKSGKKEKK (218 aa). Disordered stretches follow at residues 800 to 840 and 901 to 931; these read NKEE…WPNN and ATLTNAAGKRDGKAPAGGNGNKKKSGKKEKK. The span at 809–840 shows a compositional bias: polar residues; sequence APPNTDWRFSQAQRPGTSGSQNGDDTGTWPNN. Over residues 921 to 931 the composition is skewed to basic residues; the sequence is NKKKSGKKEKK.

The protein localises to the cell membrane. Functionally, potential calcium-dependent cell-adhesion protein. May be involved in the establishment and maintenance of specific neuronal connections in the brain. The chain is Protocadherin gamma-A5 (PCDHGA5) from Homo sapiens (Human).